The primary structure comprises 1094 residues: Probable serine/threonine-protein kinase kinX (1094 aa).

A Protein kinase domain is found at 22–281 (LDFISEIGSG…QTLKQIKTTL (260 aa)). Residues 28–36 (IGSGGFGKV) and Lys-49 contribute to the ATP site. Catalysis depends on Asp-146, which acts as the Proton acceptor. 2 disordered regions span residues 301-884 (TTNG…SVED) and 946-1083 (IKVE…PNNK). A compositionally biased stretch (acidic residues) spans 330–344 (YDDDDDDDDDDDDND). A compositionally biased stretch (polar residues) spans 351–373 (SDNSNSNVTLESNSNYNSSTING). A compositionally biased stretch (low complexity) spans 374–387 (QEQQEQQEQQQQQQ). Residues 393–408 (DEGEIEQDDDNIEVYD) show a composition bias toward acidic residues. Residues 410–424 (DYQKKLEEHQKELLE) are compositionally biased toward basic and acidic residues. 3 stretches are compositionally biased toward acidic residues: residues 433 to 454 (STDENEVYEQEEEEEEEDEEEQ), 480 to 496 (DDEDDDDDEEDEEEGDE), and 503 to 523 (DFDEDDEDDEEYDEDEDDEDE). Low complexity-rich tracts occupy residues 526 to 542 (IQYYQQQLQYQQQLQKQ) and 564 to 585 (RQLQQQQQQQQQQQQQQQQHQQ). Over residues 587-602 (YDDDDDDDDEEEEEYD) the composition is skewed to acidic residues. Basic and acidic residues predominate over residues 603-639 (DVIRHDTDSEEESKDKTPLPWDQHFEKQKESENKVEQ). Positions 650 to 661 (QETEQQQQQQQQ) are enriched in low complexity. Basic and acidic residues predominate over residues 670 to 801 (PTKVEDVKVE…EPVEEVKVEE (132 aa)). The tract at residues 676 to 978 (VKVETEEQTK…PVKVEVASPV (303 aa)) is 40 X 9 AA approximate repeats of V-K-V-E-E-P-V-E-E. Positions 802–816 (PVEEVEAEESVQEPV) are enriched in acidic residues. Composition is skewed to basic and acidic residues over residues 817–884 (EEVK…SVED) and 946–971 (IKVEEPIKVEEPIKVEEPIKVEEPVK). Composition is skewed to low complexity over residues 972-985 (VEVASPVVQEQPPQ) and 992-1011 (VVSTSTITIASSPQQSSNSP). Polar residues predominate over residues 1016–1031 (VKQPQQQEIEVNSTPI). Positions 1032–1050 (KQQQQQQQTPTQQTQTPTK) are enriched in low complexity.

It belongs to the protein kinase superfamily. TKL Ser/Thr protein kinase family.

The enzyme catalyses L-seryl-[protein] + ATP = O-phospho-L-seryl-[protein] + ADP + H(+). The catalysed reaction is L-threonyl-[protein] + ATP = O-phospho-L-threonyl-[protein] + ADP + H(+). The chain is Probable serine/threonine-protein kinase kinX (kinX) from Dictyostelium discoideum (Social amoeba).